The chain runs to 363 residues: Spore germination protein YndE (363 aa).

10 helical membrane passes run 8–28, 41–61, 84–104, 113–133, 149–169, 189–209, 218–238, 273–293, 305–325, and 335–355; these read ITTA…GVLT, DGWI…MIIA, LGHL…AFEV, FFLL…WIGL, MIFP…LGIF, VKTT…VAFM, AVVI…IMVI, FLLV…FYAA, PLSC…MPKN, and TVSH…LVIS.

Belongs to the amino acid-polyamine-organocation (APC) superfamily. Spore germination protein (SGP) (TC 2.A.3.9) family.

Its subcellular location is the cell membrane. Involved in the germinative response to L-alanine. Could be an amino acid transporter. The protein is Spore germination protein YndE (yndE) of Bacillus subtilis (strain 168).